The chain runs to 677 residues: Protein hook (677 aa).

The Calponin-homology (CH) domain occupies 6–123; sequence NEMYYSLLEW…RLLQLVLGCA (118 aa). 2 coiled-coil regions span residues 135 to 436 and 478 to 588; these read EIMC…KCGH and QTAL…AKEV.

The protein belongs to the hook family. As to quaternary structure, homodimer. Interacts with microtubules via its N-terminus.

It localises to the cytoplasm. The protein localises to the cytoskeleton. It is found in the endosome. Its subcellular location is the synapse. Involved in endocytic trafficking by stabilizing organelles of the endocytic pathway. Probably acts as a cytoskeletal linker protein required to tether endosome vesicles to the cytoskeleton. Involved in modulation of endocytosis at stages required for down-regulation of membrane proteins that control synapse size. Not involved in synaptic vesicle recycling. Required in R7 cells for boss endocytosis into multivesicular bodies (MVBs). Has a role in regulating adult longevity. In Drosophila pseudoobscura pseudoobscura (Fruit fly), this protein is Protein hook.